We begin with the raw amino-acid sequence, 1157 residues long: Nitric oxide synthase, inducible (1157 aa).

The short motif at 23–27 (DINNN) is the DINNN-motif; mediates interaction with SPSB1, SPSB2 and SPSB4 element. A disordered region spans residues 29 to 64 (EKLRQASSSPVTQDDPKCPSRSRHRNECSQPLAETA). C110 and C115 together coordinate Zn(2+). Heme b is bound at residue C200. L-arginine is bound by residues Q263, W372, Y373, and E377. R381, I462, W463, and F476 together coordinate (6R)-L-erythro-5,6,7,8-tetrahydrobiopterin. Y491 provides a ligand contact to heme b. The tract at residues 515–535 (FKVLVKAVLFAAVLMHKTMAA) is calmodulin-binding. Positions 539 to 677 (ATILFATETG…AFRGWAVQTF (139 aa)) constitute a Flavodoxin-like domain. FMN is bound by residues T545, E546, T547, R549, S550, S591, T592, S628, C635, E661, and Q665. The region spanning 730–970 (KYVFSMRLKS…VRSASGFQLP (241 aa)) is the FAD-binding FR-type domain. R750 contacts NADP(+). 6 residues coordinate FAD: H772, R906, Y908, S909, T924, and A926. Residue T929 coordinates NADP(+). 4 residues coordinate FAD: Y930, V943, C944, and S945. 8 residues coordinate NADP(+): T984, R1017, S1046, R1047, K1053, Y1055, Q1057, and D1090. The tract at residues 1138–1157 (KEGAVGPPSDPRAPGAHGKS) is disordered.

The protein belongs to the NOS family. Homodimer. Interacts with NHERF1. Interacts with GAPDH; induced by oxidatively-modified low-densitity lipoprotein (LDL(ox)). Interacts with S100A8 and S100A9 to form the iNOS-S100A8/9 transnitrosylase complex. Interacts with SPSB1, SPSB2 and SPSB4. Interacts with ELOC and CUL5 in the presence of SPSB1 or SPSB2 or SPSB4. Forms a complex with ASL, ASS1 and HSP90AA1; the complex regulates cell-autonomous L-arginine synthesis and citrulline recycling while channeling extracellular L-arginine to nitric oxide synthesis pathway. Requires heme b as cofactor. It depends on FAD as a cofactor. The cofactor is FMN. (6R)-L-erythro-5,6,7,8-tetrahydrobiopterin is required as a cofactor. Polyubiquitinated; mediated by SPSB1, SPSB2 and SPSB4, leading to proteasomal degradation. Detected in both stimulated and unstimulated immune cells and macrophages with little or no up-regulation following cellular stimulation with lipopolysaccharides (LPS) or concanavalin A (ConA).

The protein resides in the cytoplasm. Its subcellular location is the cytosol. The catalysed reaction is 2 L-arginine + 3 NADPH + 4 O2 + H(+) = 2 L-citrulline + 2 nitric oxide + 3 NADP(+) + 4 H2O. With respect to regulation, not stimulated by calcium/calmodulin. Functionally, produces nitric oxide (NO) which is a messenger molecule with diverse functions throughout the body. In macrophages, NO mediates tumoricidal and bactericidal actions. Also has nitrosylase activity and mediates cysteine S-nitrosylation of cytoplasmic target proteins such PTGS2/COX2. As component of the iNOS-S100A8/9 transnitrosylase complex involved in the selective inflammatory stimulus-dependent S-nitrosylation of GAPDH implicated in regulation of the GAIT complex activity and probably multiple targets including ANXA5, EZR, MSN and VIM. Involved in inflammation, enhances the synthesis of pro-inflammatory mediators such as IL6 and IL8. This is Nitric oxide synthase, inducible (NOS2) from Sus scrofa (Pig).